Consider the following 739-residue polypeptide: Phosphoribosylformylglycinamidine synthase subunit PurL (739 aa).

The active site involves histidine 54. Tyrosine 57 and lysine 96 together coordinate ATP. Position 98 (glutamate 98) interacts with Mg(2+). Substrate-binding positions include serine 99–histidine 102 and arginine 121. The active-site Proton acceptor is histidine 100. Aspartate 122 lines the Mg(2+) pocket. Glutamine 245 contacts substrate. Aspartate 275 provides a ligand contact to Mg(2+). Glutamate 319–glutamine 321 provides a ligand contact to substrate. Residues aspartate 504 and glycine 541 each contribute to the ATP site. Asparagine 542 lines the Mg(2+) pocket. Serine 544 is a binding site for substrate.

The protein belongs to the FGAMS family. In terms of assembly, monomer. Part of the FGAM synthase complex composed of 1 PurL, 1 PurQ and 2 PurS subunits.

It is found in the cytoplasm. The enzyme catalyses N(2)-formyl-N(1)-(5-phospho-beta-D-ribosyl)glycinamide + L-glutamine + ATP + H2O = 2-formamido-N(1)-(5-O-phospho-beta-D-ribosyl)acetamidine + L-glutamate + ADP + phosphate + H(+). It functions in the pathway purine metabolism; IMP biosynthesis via de novo pathway; 5-amino-1-(5-phospho-D-ribosyl)imidazole from N(2)-formyl-N(1)-(5-phospho-D-ribosyl)glycinamide: step 1/2. Its function is as follows. Part of the phosphoribosylformylglycinamidine synthase complex involved in the purines biosynthetic pathway. Catalyzes the ATP-dependent conversion of formylglycinamide ribonucleotide (FGAR) and glutamine to yield formylglycinamidine ribonucleotide (FGAM) and glutamate. The FGAM synthase complex is composed of three subunits. PurQ produces an ammonia molecule by converting glutamine to glutamate. PurL transfers the ammonia molecule to FGAR to form FGAM in an ATP-dependent manner. PurS interacts with PurQ and PurL and is thought to assist in the transfer of the ammonia molecule from PurQ to PurL. This chain is Phosphoribosylformylglycinamidine synthase subunit PurL, found in Lactococcus lactis subsp. lactis (strain IL1403) (Streptococcus lactis).